The primary structure comprises 131 residues: Profilin-4 (131 aa).

Cysteines 13 and 115 form a disulfide. An Involved in PIP2 interaction motif is present at residues 81–97 (AVIRGKKGAGGITVKKT). Thr111 is subject to Phosphothreonine.

It belongs to the profilin family. In terms of assembly, occurs in many kinds of cells as a complex with monomeric actin in a 1:1 ratio. Phosphorylated by MAP kinases.

It is found in the cytoplasm. The protein resides in the cytoskeleton. Its function is as follows. Binds to actin and affects the structure of the cytoskeleton. At high concentrations, profilin prevents the polymerization of actin, whereas it enhances it at low concentrations. This is Profilin-4 from Olea europaea (Common olive).